The sequence spans 504 residues: MSTVYVLEPPTKGKVIVNTTHGPIDVELWPKEAPKSVRNFVQLCLEGYFDNTIFHRVIPGFLVQGGDPTGSGTGGDSIYGGVFADEFHSRLRFSHRGIVAMANASSPNSNGSQFFFTLDKCDWLDKKHTIFGKVTGDSIYNLLRLGEVDTSKDDRPLDPAPKILSVEVLWNPFEDIVPRVLAKTSEESAAEIKEPPTKPVKKLNLLSFGEEAEEEEKELAVVKQKIKSSHDVLNDPRLLKAEASDKERNASESKEVLSVREALNAKKEAAQKDKSFSVSDTVGNSDDDDDGEDETKFDAKMRNQVLSRRKEIGDTPSKPTQKKKSSSLKGREESTQRSDAVSSEDEKPRMEKLSLKKKGIGSEAKAEHMEKGDTDLQLYNASERARQLHKLKKRRLQGNEDSVLAKLEKFKQSISAKPFTSSNEPVVLTSSSEPVDNKEEDLSDWKNVKLKFAPERGKDKMSRRDDPDAYMVVDPLLEKGKEKFNRMQAKQKRREREWSGKSLA.

S2 bears the N-acetylserine mark. The region spanning 16–167 (IVNTTHGPID…DPAPKILSVE (152 aa)) is the PPIase cyclophilin-type domain. The stretch at 204–274 (NLLSFGEEAE…AKKEAAQKDK (71 aa)) forms a coiled coil. 3 stretches are compositionally biased toward basic and acidic residues: residues 237 to 275 (RLLK…KDKS), 344 to 354 (EDEKPRMEKLS), and 364 to 374 (AKAEHMEKGDT). Disordered stretches follow at residues 237–374 (RLLK…KGDT), 416–441 (AKPF…KEED), and 482–504 (EKFN…KSLA). A compositionally biased stretch (polar residues) spans 416–434 (AKPFTSSNEPVVLTSSSEP). A compositionally biased stretch (basic and acidic residues) spans 494–504 (REREWSGKSLA).

This sequence belongs to the cyclophilin-type PPIase family. Ubiquitous.

It is found in the nucleus. The protein resides in the cytoplasm. The catalysed reaction is [protein]-peptidylproline (omega=180) = [protein]-peptidylproline (omega=0). Its function is as follows. PPIases accelerate the folding of proteins. It catalyzes the cis-trans isomerization of proline imidic peptide bonds in oligopeptides. Involved in plant response to pathogen infection by increasing PAD4 expression in absence of EDS1 up-regulation. The chain is Peptidyl-prolyl cis-trans isomerase CYP57 (CYP57) from Arabidopsis thaliana (Mouse-ear cress).